The following is a 212-amino-acid chain: Ribonuclease HII (212 aa).

The region spanning 1-206 (MARFGVDEAG…SRDALGAAEQ (206 aa)) is the RNase H type-2 domain. A divalent metal cation-binding residues include aspartate 7, glutamate 8, and aspartate 100.

The protein belongs to the RNase HII family. Requires Mn(2+) as cofactor. The cofactor is Mg(2+).

Its subcellular location is the cytoplasm. It catalyses the reaction Endonucleolytic cleavage to 5'-phosphomonoester.. In terms of biological role, endonuclease that specifically degrades the RNA of RNA-DNA hybrids. The polypeptide is Ribonuclease HII (Halobacterium salinarum (strain ATCC 29341 / DSM 671 / R1)).